The primary structure comprises 470 residues: Zinc finger protein weckle (470 aa).

The tract at residues 1–103 (MGVPTSDWIY…DALRLEYGLP (103 aa)) is required for homodimerization. The ZAD domain occupies 10–82 (YWCRLCARDD…SKVQAIFELL (73 aa)). Zn(2+) is bound by residues cysteine 12, cysteine 15, cysteine 55, and cysteine 58. The interval 156–265 (NSDPKVLASP…LSMSPHGSQS (110 aa)) is disordered. Position 168 is a phosphoserine (serine 168). The segment covering 195 to 208 (ESDDEEAILDEDEA) has biased composition (acidic residues). Positions 214-225 (LKRKRGRPKGSG) are enriched in basic residues. Basic and acidic residues predominate over residues 237–254 (TSREPDDNAKSKQDDKTS). Polar residues predominate over residues 255 to 265 (ELSMSPHGSQS). C2H2-type zinc fingers lie at residues 271-294 (YPCKICNETFMSFMALRRHKHDMH), 300-322 (YVCDHCGKGLKTFTSLVEHQLVH), 328-350 (CICPVCNAGFKNKARLRVHSQTH), 355-377 (FECNVCGKKLQTRAILNKHKYVH), 383-405 (FKCEVCGSGCKNSTALKIHLLGH), and 411-434 (YVCKYCGKAFASNTNCRSHKWKKH).

Homodimer. Interacts with Myd88 and Toll.

The protein localises to the cell membrane. Acts as an adapter to assemble/stabilize a Toll/wek/Myd88/tube complex; required for efficient recruitment of Myd88 to Toll. Dispensable for innate immune response; plays a minimal role, if any, in the immune defense against Gram-positive bacteria and fungi. Involved in dorsoventral axis determination. In Drosophila melanogaster (Fruit fly), this protein is Zinc finger protein weckle.